The following is a 113-amino-acid chain: Large ribosomal subunit protein eL30 (113 aa).

The protein belongs to the eukaryotic ribosomal protein eL30 family.

In Spodoptera frugiperda (Fall armyworm), this protein is Large ribosomal subunit protein eL30 (RpL30).